The primary structure comprises 438 residues: High-affinity gluconate transporter (438 aa).

The next 13 helical transmembrane spans lie at 2–22, 23–43, 52–72, 108–128, 134–154, 174–194, 222–242, 258–278, 292–312, 327–347, 349–369, 370–390, and 418–438; these read PLVIVAIGVILLLLLMIRFKM, NGFIALVLVALAVGLMQGMPL, AGVGGTLGSLALIMGFGAMLG, VGFALFYEVGFVLMLPLVFTI, IPLLYVGVPMAAALSVTHGFL, TLLYGTILAIPTVILAGPVYA, FGVSVWTSLVPVVLMAMRAIA, FLGDPVMATLIAVLIAMFTFG, LVSSIKIIAMMLLIIGGGGAF, SMMHETNISPLLMAWSIAAVL, IALGSATVAAITAGGIAAPLI, ATTGVSPELMVIAVGSGSVIF, and MLETIISVCGLVGCLLLNMVI.

Belongs to the GntP permease family.

The protein localises to the cell inner membrane. The protein operates within carbohydrate acid metabolism; D-gluconate degradation. Functionally, part of the gluconate utilization system Gnt-I; high-affinity intake of gluconate. The sequence is that of High-affinity gluconate transporter (gntT) from Escherichia coli (strain K12).